Consider the following 1357-residue polypeptide: MSAGTSATGPRRGPPGLEEATSKKKQKDRANQESKDGDPRRVSMPRKEPTKDELLLDWRQSSDKVVVKLRVGTGPICLEEVDAAFTDTDCVVRLPDGRQWGGVFFAKIQSSCTKVQTRKGGLLQLALPKKVPLLTWPSLLKKPLGTQELVPGLRCQENGQELSPIALEPGSEPRRAKQEARNQKRAQGRGEVGSGASPGAQAGPSAKRAVHLCRGPEGEGSMDGPGPQGDAPSFLSDSATQVEAEEQLHVPPVNPQTSLLGSEKNLALLTVEKTVSPRSDSVSPVMIRNRDPEKDDHFKEEMAVGADPAALADEPESMVNLAFVKNDSYEKGPDSVVVHVYVKESRRDTSRVLFREQDFTLIFQTRDGNFLRLHPGCGPHTIFRWQVKLRNLIEPEQCTFCFTASRIDICLRKRQSQRWGGLEAPATRVGGAKVAVPTGPTPLDSTPPGGGPLPLTGQEEARAVEKEKPKARSEDSGLDGVVARTPLEHVTPKPEPHLASPKPTCMVPPMPHSPVSGDSVEEDEEEEKKVCLPGFTGLVNLGNTCFMNSVIQSLSNTRELRDFFHDRSFEAEINYNNPLGTGGRLAIGFAVLLRALWKGTHQAFQPSKLKAIVASKASQFTGYAQHDAQEFMAFLLDGLHEDLNRIQNKPYTETVDSDGRPDEVVAEEAWQRHKMRNDSFIVDLFQGQYKSKLVCPVCAKVSITFDPFLYLPVPLPQKQKVLPIYYFAREPHSKPIKFLVSVSKENSSASEVLESLSQSVHVKPESLRLAEVIKNRFHRVFLPSHSLDAVSPTDVLLCFELLSPELAKERVVVLEVQQRPQVPSIPISKCAACQRKQQSEDEKLKRCTRCYRVGYCNQFCQKTHWPDHKGLCRPENIGYPFLVSVPASRLTYARLAQLLEGYARYSVSVFQPPFQPGRMALESQSPGCTTLLSTSSLEAGDSEREPIQPSELQLVTPVAEGDTGAHRMWPPADRGPVPSTSGISSEMLASGPMEGCSLLAGERVSRPEAAVPGYQHSRESVSAHTPQFFIYKIDASSREQRLEDKGDTPLELGDDCSLALVWRNNERLQEFVLVASKELECAEDPGSAGEAARAGHFTLDQCLNLFTRPEVLAPEEAWYCPQCKQHREASKQLLLWRLPNVLIVQLKRFSFRSFIWRDKINDLVEFPVRNLDLSKFCIGQKEEQLPSYDLYAVINHYGGMIGGHYTACARLPSDRSSQRSDVGWRLFDDSTVTTVDESQVVTRYAYVLFYRRRNSPVERPPRAAHAEHHPDLGPAAEAAASQASRIWQELEAEEEMVPEGPGPLGPWGPQDWVGPPPRGPTTSDEGCLRYFVLGTVAALVALVLNVFYPLVSQSRWR.

3 disordered regions span residues 1 to 52, 162 to 239, and 275 to 296; these read MSAG…PTKD, LSPI…SDSA, and VSPRSDSVSPVMIRNRDPEKDD. The Cytoplasmic portion of the chain corresponds to 1–1330; that stretch reads MSAGTSATGP…TTSDEGCLRY (1330 aa). Composition is skewed to basic and acidic residues over residues 28 to 52 and 171 to 182; these read DRANQESKDGDPRRVSMPRKEPTKD and SEPRRAKQEARN. In terms of domain architecture, CS 1 spans 51–140; it reads KDELLLDWRQ…VPLLTWPSLL (90 aa). The segment covering 194 to 206 has biased composition (low complexity); that stretch reads SGASPGAQAGPSA. S221 and S283 each carry phosphoserine. A CS 2 domain is found at 321-423; it reads LAFVKNDSYE…RQSQRWGGLE (103 aa). The tract at residues 432–479 is disordered; the sequence is AKVAVPTGPTPLDSTPPGGGPLPLTGQEEARAVEKEKPKARSEDSGLD. A compositionally biased stretch (low complexity) spans 437-457; that stretch reads PTGPTPLDSTPPGGGPLPLTG. Residues 459-475 are compositionally biased toward basic and acidic residues; sequence EEARAVEKEKPKARSED. Positions 536-1253 constitute a USP domain; that stretch reads TGLVNLGNTC…YAYVLFYRRR (718 aa). C545 serves as the catalytic Nucleophile. The Zn(2+) site is built by C830, C833, C847, C850, C856, C860, H868, and C872. The MYND-type zinc finger occupies 830 to 872; sequence CAACQRKQQSEDEKLKRCTRCYRVGYCNQFCQKTHWPDHKGLC. A disordered region spans residues 962 to 981; the sequence is DTGAHRMWPPADRGPVPSTS. Catalysis depends on H1204, which acts as the Proton acceptor. Residues 1259-1271 show a composition bias toward basic and acidic residues; sequence RPPRAAHAEHHPD. Disordered regions lie at residues 1259–1278 and 1292–1320; these read RPPRAAHAEHHPDLGPAAEA and AEEEMVPEGPGPLGPWGPQDWVGPPPRGP. A helical membrane pass occupies residues 1331–1351; that stretch reads FVLGTVAALVALVLNVFYPLV. Over 1352–1357 the chain is Lumenal; sequence SQSRWR.

In terms of assembly, interacts with RNF123. Interacts with BIRC2/c-IAP1, BIRC3/c-IAP2 and XIAP/BIRC4. Interacts with HIF1A (via N-terminus). In terms of tissue distribution, expressed in testis, heart, kidney and skeletal muscle. Low levels of expression are detectable in all other tissues screened.

It is found in the endoplasmic reticulum membrane. The catalysed reaction is Thiol-dependent hydrolysis of ester, thioester, amide, peptide and isopeptide bonds formed by the C-terminal Gly of ubiquitin (a 76-residue protein attached to proteins as an intracellular targeting signal).. Functionally, deubiquitinating enzyme that regulates the degradation of various proteins by removing ubiquitin moieties, thereby preventing their proteasomal degradation. Stabilizes RNF123, which promotes CDKN1B degradation and contributes to cell proliferation. Decreases the levels of ubiquitinated proteins during skeletal muscle formation and acts to repress myogenesis. Modulates transcription of major myofibrillar proteins. Also involved in turnover of endoplasmic-reticulum-associated degradation (ERAD) substrates. Mechanistically, deubiquitinates and thereby stabilizes several E3 ligases involved in the ERAD pathway including SYVN1 or MARCHF6. Regulates the stability of other E3 ligases including BIRC2/c-IAP1 and BIRC3/c-IAP2 by preventing their ubiquitination. Required for cells to mount an appropriate response to hypoxia by rescuing HIF1A from degradation in a non-catalytic manner and by mediating the deubiquitination of FUNDC1. Attenuates mitochondrial damage and ferroptosis by targeting and stabilizing NADPH oxidase 4/NOX4. Negatively regulates TNF-alpha- and IL-1beta-triggered NF-kappa-B activation by hydrolyzing 'Lys-27'- and 'Lys-63'-linked polyubiquitin chains from MAP3K7. Modulates also the protein level and aggregation of polyQ-expanded huntingtin/HTT through HSP90AA1. The chain is Ubiquitin carboxyl-terminal hydrolase 19 (Usp19) from Rattus norvegicus (Rat).